A 347-amino-acid chain; its full sequence is NADH-quinone oxidoreductase subunit H (347 aa).

8 helical membrane passes run 13-33 (LIIALKSVVLLVVLLIVVAYL), 82-102 (GVFLLAPFIFAVLAMATWAVI), 115-135 (VGILYIFAISSLEVYGVIMGG), 161-181 (IGFVIVTVLLTVGSLNLTDIV), 198-218 (FLDWNWLCLFPMFVVFFISAL), 248-268 (FLLFFLGEYVAITLMCALMTV), 286-306 (VPGIIWFMLKLCFCFFLFAMV), and 325-345 (VFLPISLFMVVATATFLKVFG).

It belongs to the complex I subunit 1 family. As to quaternary structure, NDH-1 is composed of 14 different subunits. Subunits NuoA, H, J, K, L, M, N constitute the membrane sector of the complex.

Its subcellular location is the cell inner membrane. It catalyses the reaction a quinone + NADH + 5 H(+)(in) = a quinol + NAD(+) + 4 H(+)(out). Functionally, NDH-1 shuttles electrons from NADH, via FMN and iron-sulfur (Fe-S) centers, to quinones in the respiratory chain. The immediate electron acceptor for the enzyme in this species is believed to be ubiquinone. Couples the redox reaction to proton translocation (for every two electrons transferred, four hydrogen ions are translocated across the cytoplasmic membrane), and thus conserves the redox energy in a proton gradient. This subunit may bind ubiquinone. This chain is NADH-quinone oxidoreductase subunit H, found in Brucella melitensis biotype 1 (strain ATCC 23456 / CCUG 17765 / NCTC 10094 / 16M).